The primary structure comprises 925 residues: ETO1-like protein 2 (925 aa).

The region spanning 207–307 (SDISFCVGSE…ECEARLAASV (101 aa)) is the BTB domain. The stretch at 409–442 (ALSLHQMGCVLFERKDYKAAQFHFRLASSLGHVY) is one TPR 1 repeat. A coiled-coil region spans residues 509–533 (KYRAVMKFEQKQIKEAFQEIDRLIQ). TPR repeat units follow at residues 538-571 (PECL…EPNY), 664-697 (AERL…QRSF), 738-771 (GQAL…KHIR), 773-803 (RQGL…SCSK), 834-867 (TYPY…RPEL), and 869-900 (TLHL…DPNH).

The protein belongs to the ETO1 family. Interacts with the C-terminal domain of ACS5. In terms of tissue distribution, constitutively expressed in green and etiolated seedlings.

It functions in the pathway protein modification; protein ubiquitination. Potential regulator of the ethylene pathway, which acts by regulating the stability of 1-aminocyclopropane-1-carboxylate synthase (ACS) enzymes. May act as a substrate-specific adapter that connects ACS enzymes, such as ACS5, to ubiquitin ligase complexes, leading to proteasomal degradation of ACS enzymes. This chain is ETO1-like protein 2 (EOL2), found in Arabidopsis thaliana (Mouse-ear cress).